A 219-amino-acid polypeptide reads, in one-letter code: 7-cyano-7-deazaguanine synthase (219 aa).

Position 10–20 (10–20 (FSGGQDSTTCL)) interacts with ATP. Residues Cys188, Cys197, Cys200, and Cys203 each coordinate Zn(2+).

Belongs to the QueC family. As to quaternary structure, homodimer. Zn(2+) is required as a cofactor.

The catalysed reaction is 7-carboxy-7-deazaguanine + NH4(+) + ATP = 7-cyano-7-deazaguanine + ADP + phosphate + H2O + H(+). It participates in purine metabolism; 7-cyano-7-deazaguanine biosynthesis. Its function is as follows. Catalyzes the ATP-dependent conversion of 7-carboxy-7-deazaguanine (CDG) to 7-cyano-7-deazaguanine (preQ(0)). This Clostridium botulinum (strain Langeland / NCTC 10281 / Type F) protein is 7-cyano-7-deazaguanine synthase.